The following is a 428-amino-acid chain: tRNA(Ile)-lysidine synthase (428 aa).

An ATP-binding site is contributed by 28–33; sequence SGGVDS.

This sequence belongs to the tRNA(Ile)-lysidine synthase family.

The protein resides in the cytoplasm. It carries out the reaction cytidine(34) in tRNA(Ile2) + L-lysine + ATP = lysidine(34) in tRNA(Ile2) + AMP + diphosphate + H(+). Functionally, ligates lysine onto the cytidine present at position 34 of the AUA codon-specific tRNA(Ile) that contains the anticodon CAU, in an ATP-dependent manner. Cytidine is converted to lysidine, thus changing the amino acid specificity of the tRNA from methionine to isoleucine. The chain is tRNA(Ile)-lysidine synthase from Streptococcus pyogenes serotype M18 (strain MGAS8232).